The following is a 313-amino-acid chain: Mas-related G-protein coupled receptor member A4 (313 aa).

The Extracellular portion of the chain corresponds to 1–25 (MAPTTTNPMNETIPGSIDIETLIPN). N-linked (GlcNAc...) asparagine glycosylation occurs at N10. The chain crosses the membrane as a helical span at residues 26-46 (LMIIIFGLVGLTGNVILFWLL). At 47-54 (GFHLHRNA) the chain is on the cytoplasmic side. A helical membrane pass occupies residues 55-75 (FLVYILNLALADFLFLLCHII). An N-linked (GlcNAc...) asparagine glycan is attached at N76. Residues 76–93 (NSTMLLLKVHLPNNILNH) are Extracellular-facing. Residues 94 to 114 (CFDIIMTVLYITGLSMLSAIS) form a helical membrane-spanning segment. The Cytoplasmic portion of the chain corresponds to 115–137 (TERCLSVLCPIWYRCRRPEHTST). A helical transmembrane segment spans residues 138–158 (VLCAVIWFLPLLICILNGYFC). Residues 159-182 (HFFGPKYVIDSVCLATNFFIRTYP) are Extracellular-facing. The helical transmembrane segment at 183–203 (MFLFIVLCLSTLALLARLFCG) threads the bilayer. At 204-219 (AGKTKFTRLFVTIMLT) the chain is on the cytoplasmic side. A helical transmembrane segment spans residues 220–240 (VLVFLLCGLPLGFFWFLVPWI). The Extracellular segment spans residues 241–255 (NRDFSVLDYILFQTS). A helical membrane pass occupies residues 256 to 276 (LVLTSVNSCANPIIYFFVGSF). Residues 277 to 313 (RHRLKHKTLKMVLQSALQDTPETPENMVEMSRSKAEP) are Cytoplasmic-facing.

The protein belongs to the G-protein coupled receptor 1 family. Mas subfamily. Expressed in a subset of sensory neurons that includes nociceptors. Expressed in the subclass of non-peptidergic sensory neurons that are IB4(+) and VR1(-).

The protein resides in the cell membrane. In terms of biological role, orphan receptor. May be a receptor for RFamide-family neuropeptides such as NPFF and NPAF, which are analgesic in vivo. May regulate nociceptor function and/or development, including the sensation or modulation of pain. This is Mas-related G-protein coupled receptor member A4 (Mrgpra4) from Mus musculus (Mouse).